A 336-amino-acid polypeptide reads, in one-letter code: Cytosolic Fe-S cluster assembly factor NBP35 (336 aa).

The interval 1–20 is disordered; it reads MIATQRPFPIPSPVPLAPSS. [4Fe-4S] cluster-binding residues include Cys-35, Cys-49, Cys-52, and Cys-58. ATP is bound at residue 88–95; it reads GKGGVGKS. [4Fe-4S] cluster contacts are provided by Cys-261 and Cys-264.

It belongs to the Mrp/NBP35 ATP-binding proteins family. NUBP1/NBP35 subfamily. As to quaternary structure, heterotetramer of 2 NBP35 and 2 CFD1 chains. It depends on [4Fe-4S] cluster as a cofactor.

The protein localises to the cytoplasm. Component of the cytosolic iron-sulfur (Fe/S) protein assembly (CIA) machinery. Required for maturation of extramitochondrial Fe-S proteins. The NBP35-CFD1 heterotetramer forms a Fe-S scaffold complex, mediating the de novo assembly of an Fe-S cluster and its transfer to target apoproteins. This is Cytosolic Fe-S cluster assembly factor NBP35 from Cryptococcus neoformans var. neoformans serotype D (strain B-3501A) (Filobasidiella neoformans).